We begin with the raw amino-acid sequence, 619 residues long: UvrABC system protein C (619 aa).

A GIY-YIG domain is found at 20–98 (TAPGVYRMYA…IKSLSPRYNV (79 aa)). The UVR domain maps to 207 to 242 (DQLGEEIMHSMQQASEALEFERAARLRDLLSSLRSM).

It belongs to the UvrC family. Interacts with UvrB in an incision complex.

It is found in the cytoplasm. The UvrABC repair system catalyzes the recognition and processing of DNA lesions. UvrC both incises the 5' and 3' sides of the lesion. The N-terminal half is responsible for the 3' incision and the C-terminal half is responsible for the 5' incision. This chain is UvrABC system protein C, found in Xanthomonas euvesicatoria pv. vesicatoria (strain 85-10) (Xanthomonas campestris pv. vesicatoria).